Consider the following 342-residue polypeptide: 4-amino-5-hydroxymethyl-2-methylpyrimidine phosphate synthase (342 aa).

Residue lysine 62 is modified to N6-(pyridoxal phosphate)lysine. Histidine 66 is an active-site residue. 115 to 118 (GEFG) contributes to the pyridoxal 5'-phosphate binding site. The CCCFC; essential for catalytic activity, may be the site of iron coordination signature appears at 195–199 (CCCFC).

Belongs to the NMT1/THI5 family. Homodimer. The cofactor is Fe cation.

The catalysed reaction is N(6)-(pyridoxal phosphate)-L-lysyl-[4-amino-5-hydroxymethyl-2-methylpyrimidine phosphate synthase] + L-histidyl-[4-amino-5-hydroxymethyl-2-methylpyrimidine phosphate synthase] + 2 Fe(3+) + 4 H2O = L-lysyl-[4-amino-5-hydroxymethyl-2-methylpyrimidine phosphate synthase] + (2S)-2-amino-5-hydroxy-4-oxopentanoyl-[4-amino-5-hydroxymethyl-2-methylpyrimidine phosphate synthase] + 4-amino-2-methyl-5-(phosphooxymethyl)pyrimidine + 3-oxopropanoate + 2 Fe(2+) + 2 H(+). Its pathway is cofactor biosynthesis; thiamine diphosphate biosynthesis. Functionally, responsible for the formation of the pyrimidine heterocycle in the thiamine biosynthesis pathway. Catalyzes the formation of hydroxymethylpyrimidine phosphate (HMP-P) from histidine and pyridoxal phosphate (PLP). The protein uses PLP and the active site histidine to form HMP-P, generating an inactive enzyme. The enzyme can only undergo a single turnover, which suggests it is a suicide enzyme. The chain is 4-amino-5-hydroxymethyl-2-methylpyrimidine phosphate synthase from Aspergillus parasiticus.